A 317-amino-acid polypeptide reads, in one-letter code: Methionyl-tRNA formyltransferase (317 aa).

112–115 provides a ligand contact to (6S)-5,6,7,8-tetrahydrofolate; the sequence is SLLP.

This sequence belongs to the Fmt family.

It carries out the reaction L-methionyl-tRNA(fMet) + (6R)-10-formyltetrahydrofolate = N-formyl-L-methionyl-tRNA(fMet) + (6S)-5,6,7,8-tetrahydrofolate + H(+). Functionally, attaches a formyl group to the free amino group of methionyl-tRNA(fMet). The formyl group appears to play a dual role in the initiator identity of N-formylmethionyl-tRNA by promoting its recognition by IF2 and preventing the misappropriation of this tRNA by the elongation apparatus. The chain is Methionyl-tRNA formyltransferase from Mycobacterium avium (strain 104).